The sequence spans 964 residues: Integrator complex subunit 4 (964 aa).

Lys27 bears the N6-acetyllysine mark. HEAT repeat units lie at residues Ala67–Phe106, Gln146–Ser184, Gly191–Lys229, Leu230–Tyr264, Ile278–Ser314, Asn370–Ser406, Pro407–Leu445, and Glu447–Leu485. Lys792 participates in a covalent cross-link: Glycyl lysine isopeptide (Lys-Gly) (interchain with G-Cter in SUMO1); alternate. Lys792 is covalently cross-linked (Glycyl lysine isopeptide (Lys-Gly) (interchain with G-Cter in SUMO2); alternate).

The protein belongs to the Integrator subunit 4 family. As to quaternary structure, component of the Integrator complex, composed of core subunits INTS1, INTS2, INTS3, INTS4, INTS5, INTS6, INTS7, INTS8, INTS9/RC74, INTS10, INTS11/CPSF3L, INTS12, INTS13, INTS14 and INTS15. The core complex associates with protein phosphatase 2A subunits PPP2CA and PPP2R1A, to form the Integrator-PP2A (INTAC) complex. INTS4 is part of the RNA endonuclease subcomplex, composed of INTS4, INTS9, INTS11 and inositol hexakisphosphate (InsP6). Interacts with BRAT1; interaction is required for the assembly of the RNA endonuclease subcomplex.

It localises to the nucleus. It is found in the cytoplasm. In terms of biological role, component of the integrator complex, a multiprotein complex that terminates RNA polymerase II (Pol II) transcription in the promoter-proximal region of genes. The integrator complex provides a quality checkpoint during transcription elongation by driving premature transcription termination of transcripts that are unfavorably configured for transcriptional elongation: the complex terminates transcription by (1) catalyzing dephosphorylation of the C-terminal domain (CTD) of Pol II subunit POLR2A/RPB1 and SUPT5H/SPT5, (2) degrading the exiting nascent RNA transcript via endonuclease activity and (3) promoting the release of Pol II from bound DNA. The integrator complex is also involved in terminating the synthesis of non-coding Pol II transcripts, such as enhancer RNAs (eRNAs), small nuclear RNAs (snRNAs), telomerase RNAs and long non-coding RNAs (lncRNAs). Within the integrator complex, INTS4 acts as an scaffold that links INTS9 and INTS11. Mediates recruitment of cytoplasmic dynein to the nuclear envelope, probably as component of the integrator complex. The polypeptide is Integrator complex subunit 4 (Ints4) (Mus musculus (Mouse)).